A 1225-amino-acid chain; its full sequence is Hyphally regulated cell wall protein 4 (1225 aa).

The N-terminal stretch at 1 to 20 is a signal peptide; the sequence is MFSYSQAIRFIIFLLPICLT. 6 N-linked (GlcNAc...) asparagine glycosylation sites follow: Asn97, Asn200, Asn488, Asn595, Asn634, and Asn694. The segment at 832-852 is disordered; it reads DLDLPDDTTFTPSQSSSTTVP. The span at 838–852 shows a compositional bias: low complexity; it reads DTTFTPSQSSSTTVP. Residues Asn933 and Asn1035 are each glycosylated (N-linked (GlcNAc...) asparagine). A disordered region spans residues 1049–1114; sequence AYTQQDASTQ…NSHFEGTFIS (66 aa). Asn1133, Asn1150, Asn1182, and Asn1193 each carry an N-linked (GlcNAc...) asparagine glycan. Ser1195 carries the GPI-anchor amidated serine lipid modification. A propeptide spans 1196 to 1225 (removed in mature form); that stretch reads GLISKSESVVLLIRPVMIFVFLAICVVIML.

It belongs to the HYR1/IFF family. Post-translationally, the GPI-anchor is attached to the protein in the endoplasmic reticulum and serves to target the protein to the cell surface. There, the glucosamine-inositol phospholipid moiety is cleaved off and the GPI-modified mannoprotein is covalently attached via its lipidless GPI glycan remnant to the 1,6-beta-glucan of the outer cell wall layer.

The protein localises to the secreted. Its subcellular location is the cell wall. It is found in the membrane. Functionally, GPI-anchored cell wall protein involved in cell wall organization, hyphal growth, as well as in host-fungal interaction and virulence. This chain is Hyphally regulated cell wall protein 4 (HYR4), found in Candida albicans (strain SC5314 / ATCC MYA-2876) (Yeast).